A 478-amino-acid chain; its full sequence is Glutamyl-tRNA reductase (478 aa).

Residues 49 to 52 (TCNR), Ser-109, 114 to 116 (EQQ), and Gln-120 contribute to the substrate site. Catalysis depends on Cys-50, which acts as the Nucleophile. 191–196 (GAGSMG) contacts NADP(+).

This sequence belongs to the glutamyl-tRNA reductase family. In terms of assembly, homodimer.

It carries out the reaction (S)-4-amino-5-oxopentanoate + tRNA(Glu) + NADP(+) = L-glutamyl-tRNA(Glu) + NADPH + H(+). It functions in the pathway porphyrin-containing compound metabolism; protoporphyrin-IX biosynthesis; 5-aminolevulinate from L-glutamyl-tRNA(Glu): step 1/2. Catalyzes the NADPH-dependent reduction of glutamyl-tRNA(Glu) to glutamate 1-semialdehyde (GSA). This Rhodococcus opacus (strain B4) protein is Glutamyl-tRNA reductase.